Consider the following 485-residue polypeptide: WD repeat-containing protein 13 (485 aa).

Phosphoserine is present on residues serine 70, serine 74, and serine 79. An Asymmetric dimethylarginine; alternate modification is found at arginine 114. Arginine 114 bears the Omega-N-methylarginine; alternate mark. 5 WD repeats span residues 170 to 210, 215 to 254, 302 to 341, 406 to 446, and 451 to 484; these read HVDE…PTVL, GHTR…CIRE, KLTG…GKLT, HPVR…KAAV, and GHSA…RREQ.

The protein resides in the nucleus. The polypeptide is WD repeat-containing protein 13 (WDR13) (Pongo abelii (Sumatran orangutan)).